Here is a 509-residue protein sequence, read N- to C-terminus: Methionine--tRNA ligase (509 aa).

Residues 12–22 carry the 'HIGH' region motif; sequence YYPSGDLHLGH. A 'KMSKS' region motif is present at residues 302-306; sequence KMSKS. Residue K305 participates in ATP binding.

Belongs to the class-I aminoacyl-tRNA synthetase family. MetG type 2B subfamily. As to quaternary structure, monomer.

It localises to the cytoplasm. The catalysed reaction is tRNA(Met) + L-methionine + ATP = L-methionyl-tRNA(Met) + AMP + diphosphate. Is required not only for elongation of protein synthesis but also for the initiation of all mRNA translation through initiator tRNA(fMet) aminoacylation. The chain is Methionine--tRNA ligase (metG) from Mycoplasmopsis pulmonis (strain UAB CTIP) (Mycoplasma pulmonis).